The following is a 444-amino-acid chain: Adenylosuccinate lyase (444 aa).

N(6)-(1,2-dicarboxyethyl)-AMP is bound by residues 9–10 (RY), 73–75 (KHD), and 97–98 (TS). The Proton donor/acceptor role is filled by H145. N(6)-(1,2-dicarboxyethyl)-AMP is bound at residue Q219. The active-site Proton donor/acceptor is S269. Residues S270, 275 to 277 (KRN), N283, and 314 to 318 (SAERI) contribute to the N(6)-(1,2-dicarboxyethyl)-AMP site.

The protein belongs to the lyase 1 family. Adenylosuccinate lyase subfamily. In terms of assembly, homotetramer. Residues from neighboring subunits contribute catalytic and substrate-binding residues to each active site.

It carries out the reaction N(6)-(1,2-dicarboxyethyl)-AMP = fumarate + AMP. The catalysed reaction is (2S)-2-[5-amino-1-(5-phospho-beta-D-ribosyl)imidazole-4-carboxamido]succinate = 5-amino-1-(5-phospho-beta-D-ribosyl)imidazole-4-carboxamide + fumarate. Its pathway is purine metabolism; AMP biosynthesis via de novo pathway; AMP from IMP: step 2/2. It participates in purine metabolism; IMP biosynthesis via de novo pathway; 5-amino-1-(5-phospho-D-ribosyl)imidazole-4-carboxamide from 5-amino-1-(5-phospho-D-ribosyl)imidazole-4-carboxylate: step 2/2. Its function is as follows. Catalyzes two reactions in de novo purine nucleotide biosynthesis. Catalyzes the breakdown of 5-aminoimidazole- (N-succinylocarboxamide) ribotide (SAICAR or 2-[5-amino-1-(5-phospho-beta-D-ribosyl)imidazole-4-carboxamido]succinate) to 5-aminoimidazole-4-carboxamide ribotide (AICAR or 5-amino-1-(5-phospho-beta-D-ribosyl)imidazole-4-carboxamide) and fumarate, and of adenylosuccinate (ADS or N(6)-(1,2-dicarboxyethyl)-AMP) to adenosine monophosphate (AMP) and fumarate. This is Adenylosuccinate lyase (purB) from Archaeoglobus fulgidus (strain ATCC 49558 / DSM 4304 / JCM 9628 / NBRC 100126 / VC-16).